A 245-amino-acid chain; its full sequence is MLIIPAIDLKDGACVRLRQGLMEDATVFSDDPVAMAAKWVDGGCRRLHLVDLNGAFEGKPVNGEVVTAIARRYPDLPIQIGGGIRSLETIEHYVRAGVSYVIIGTKAVKQPEFVGEACRAFPGKVIVGLDAKDGFVATDGWAEVSEVQVIDLARRFEADGVSAIVYTDISKDGMMQGCNVEATAALANATRIPVIASGGIHNLGDIQKLLDARTPGIIGAITGRAIYEGTLDVAEAQALCDNFKA.

The active-site Proton acceptor is D8. Catalysis depends on D130, which acts as the Proton donor.

It belongs to the HisA/HisF family.

The protein localises to the cytoplasm. The catalysed reaction is 1-(5-phospho-beta-D-ribosyl)-5-[(5-phospho-beta-D-ribosylamino)methylideneamino]imidazole-4-carboxamide = 5-[(5-phospho-1-deoxy-D-ribulos-1-ylimino)methylamino]-1-(5-phospho-beta-D-ribosyl)imidazole-4-carboxamide. It functions in the pathway amino-acid biosynthesis; L-histidine biosynthesis; L-histidine from 5-phospho-alpha-D-ribose 1-diphosphate: step 4/9. The sequence is that of 1-(5-phosphoribosyl)-5-[(5-phosphoribosylamino)methylideneamino] imidazole-4-carboxamide isomerase from Pseudomonas aeruginosa (strain LESB58).